We begin with the raw amino-acid sequence, 757 residues long: Centrosomal protein of 68 kDa (757 aa).

Basic and acidic residues-rich tracts occupy residues 1–17 and 86–96; these read MALG…EDTK and ANREPVAERSE. Disordered regions lie at residues 1–47, 67–158, 192–259, 311–480, 509–551, and 597–618; these read MALG…RLEA, WIGT…PSLA, QPSS…GGDA, PGPQ…ESDD, PTGD…SGDP, and LDRW…GGEQ. Residues 125-144 show a composition bias toward polar residues; the sequence is LSSSEEFPQTLSLPRTTTIC. Composition is skewed to low complexity over residues 192–206 and 224–240; these read QPSS…TGSS and VSSS…SSVV. Serine 332 bears the Phosphoserine; by PLK1 mark. Residues 339–355 are compositionally biased toward polar residues; the sequence is FSVSPASTLKSPTNVSP. 2 stretches are compositionally biased toward basic and acidic residues: residues 405–432 and 439–456; these read GSRD…KHLD and RTRD…EKRT. Residues 457–467 show a composition bias toward polar residues; sequence SQSARRPTCTE. Phosphoserine is present on residues serine 472 and serine 478. The segment covering 524–543 has biased composition (low complexity); that stretch reads SDGPASFPSSSSQSQLPPGA.

As to quaternary structure, interacts with CNTLN; the interaction recruits CEP68 to the centrosome. Interacts with the SCF(FBXW11) complex which contains SKP1, CUL1 and FBXW11; the interaction is probably mediated by FBXW11 and the complex also contains CDK5RAP2 and PCNT. Also interacts with F-box protein BTRC. Interacts with serine/threonine-protein kinase PLK1; the interaction leads to phosphorylation of CEP68 and its subsequent degradation. Interacts with NEK2; the interaction leads to phosphorylation of CEP68. In terms of processing, phosphorylation by PLK1 is required for binding to BTRC in prometaphase. Phosphorylated directly or indirectly by NEK2. NEK2-mediated phosphorylation promotes CEP68 dissociation from the centrosome and its degradation at the onset of mitosis. Ubiquitinated and targeted for proteasomal degradation in early mitosis by the SCF(BTRC) and/or SCF(FBXW11) E3 ubiquitin-protein ligase complexes. Degradation is complete by prometaphase and is required for removal of CDK5RAP2 from the peripheral pericentriolar material and subsequent centriole separation.

It is found in the cytoplasm. The protein localises to the cytoskeleton. Its subcellular location is the microtubule organizing center. It localises to the centrosome. Involved in maintenance of centrosome cohesion, probably as part of a linker structure which prevents centrosome splitting. Required for localization of CDK5RAP2 to the centrosome during interphase. Contributes to CROCC/rootletin filament formation. The polypeptide is Centrosomal protein of 68 kDa (CEP68) (Homo sapiens (Human)).